Reading from the N-terminus, the 332-residue chain is Anthranilate phosphoribosyltransferase (332 aa).

5-phospho-alpha-D-ribose 1-diphosphate contacts are provided by residues G79, 82–83 (GD), T87, 89–92 (NIST), 107–115 (KHGNRSVSS), and S119. An anthranilate-binding site is contributed by G79. Position 91 (S91) interacts with Mg(2+). Residue N110 participates in anthranilate binding. Residue R165 coordinates anthranilate. Mg(2+)-binding residues include D223 and E224.

Belongs to the anthranilate phosphoribosyltransferase family. In terms of assembly, homodimer. Mg(2+) serves as cofactor.

The catalysed reaction is N-(5-phospho-beta-D-ribosyl)anthranilate + diphosphate = 5-phospho-alpha-D-ribose 1-diphosphate + anthranilate. It participates in amino-acid biosynthesis; L-tryptophan biosynthesis; L-tryptophan from chorismate: step 2/5. In terms of biological role, catalyzes the transfer of the phosphoribosyl group of 5-phosphorylribose-1-pyrophosphate (PRPP) to anthranilate to yield N-(5'-phosphoribosyl)-anthranilate (PRA). The chain is Anthranilate phosphoribosyltransferase from Vibrio parahaemolyticus serotype O3:K6 (strain RIMD 2210633).